Here is a 26-residue protein sequence, read N- to C-terminus: Histone H2B.1, sperm (26 aa).

The disordered stretch occupies residues 1–26 (MPSQKSPTKRSPTKRSPQKGGKGAKR). Short sequence motifs (SPKK motif) lie at residues 6–9 (SPTK), 11–14 (SPTK), and 16–19 (SPQK). Positions 7–26 (PTKRSPTKRSPQKGGKGAKR) are enriched in basic residues. 2 positions are modified to phosphoserine: serine 11 and serine 16.

This sequence belongs to the histone H2B family. As to quaternary structure, the nucleosome is a histone octamer containing two molecules each of H2A, H2B, H3 and H4 assembled in one H3-H4 heterotetramer and two H2A-H2B heterodimers. The octamer wraps approximately 147 bp of DNA. In terms of processing, monoubiquitination gives a specific tag for epigenetic transcriptional activation and is also prerequisite for histone H3 'Lys-4' and 'Lys-79' methylation. Post-translationally, phosphorylated on SPKK motifs 2 and 3; which may regulate DNA binding. Dephosphorylated during maturation of spermatids to mature sperm and rephosphorylated at fertilization.

Its subcellular location is the nucleus. It localises to the chromosome. In terms of biological role, core component of nucleosome. Nucleosomes wrap and compact DNA into chromatin, limiting DNA accessibility to the cellular machineries which require DNA as a template. Histones thereby play a central role in transcription regulation, DNA repair, DNA replication and chromosomal stability. DNA accessibility is regulated via a complex set of post-translational modifications of histones, also called histone code, and nucleosome remodeling. In Echinus esculentus (Sea urchin), this protein is Histone H2B.1, sperm.